A 49-amino-acid polypeptide reads, in one-letter code: Delta-actitoxin-Axm1b (49 aa).

The segment at 1–7 is well-structured region; the sequence is GVPCLCD. Intrachain disulfides connect cysteine 4/cysteine 46, cysteine 6/cysteine 36, and cysteine 29/cysteine 47. Positions 8-17 are arg-14 loop (non-well-structured region); sequence SDGPRPRGNT. Residues 18–49 form a well-structured region region; the sequence is LSGILWFYPSGCPSGWHNCKAHGPNIGWCCKK.

Belongs to the sea anemone sodium channel inhibitory toxin family. Type I subfamily.

The protein localises to the secreted. The protein resides in the nematocyst. In terms of biological role, binds specifically to voltage-gated sodium channels (Nav) (site 3), thereby delaying their inactivation. This toxin has the highest affinity of all anemone toxins for the mammalian sodium channel, whereas its paralog Anthopleurin-A retains the greatest capacity to discriminate between cardiac (Nav1.5/SCN5A) and neuronal sodium channels. When tested electrophysiologically, this toxin exhibits a high affinity for multiple sodium channels with a 50-fold preference for rat cardiac (Nav1.5/SCN5A) over neuronal channels (0.1 nM versus 5 nM). When tested by ion flux, the affinities are similar and appear to have higher affinity (9 nM versus 22 nM). The residue Lys-37 of this toxin has been shown to interact with channel Nav1.5 (residue Asp-1612 in rat and Asp-1610 in human), which is located in the DIV S3-S4 linker (corresponding to channel site 3). Selectively modifies sodium channel inactivation from the open state with little effect on channel activation or on inactivation from closed states. Does not display phospholipid-binding activities, suggesting that the domain IV S3-S4 linker is located at the extracellular surface and not buried in the phospholipid bilayer. This Anthopleura xanthogrammica (Giant green sea anemone) protein is Delta-actitoxin-Axm1b.